Consider the following 563-residue polypeptide: Arginine--tRNA ligase (563 aa).

The protein belongs to the class-I aminoacyl-tRNA synthetase family. In terms of assembly, monomer.

It catalyses the reaction tRNA(Arg) + L-arginine + ATP = L-arginyl-tRNA(Arg) + AMP + diphosphate. The polypeptide is Arginine--tRNA ligase (Encephalitozoon cuniculi (strain GB-M1) (Microsporidian parasite)).